Reading from the N-terminus, the 219-residue chain is uncharacterized protein (219 aa).

Aspartate 58 is an active-site residue.

The protein belongs to the pseudouridine synthase RluA family.

The enzyme catalyses a uridine in RNA = a pseudouridine in RNA. This is an uncharacterized protein from Zymomonas mobilis subsp. mobilis (strain ATCC 31821 / ZM4 / CP4).